We begin with the raw amino-acid sequence, 94 residues long: Integration host factor subunit beta (94 aa).

It belongs to the bacterial histone-like protein family. Heterodimer of an alpha and a beta chain.

In terms of biological role, this protein is one of the two subunits of integration host factor, a specific DNA-binding protein that functions in genetic recombination as well as in transcriptional and translational control. In Pasteurella multocida (strain Pm70), this protein is Integration host factor subunit beta (ihfB).